We begin with the raw amino-acid sequence, 392 residues long: Telomere-binding protein subunit beta (392 aa).

The disordered stretch occupies residues 234–392 (QQVESVQVQP…ASKASKRSKK (159 aa)). Residues 247–256 (GGAKGKKKAA) are compositionally biased toward basic residues. Low complexity predominate over residues 257–268 (TKSATKKTVAAK). The span at 269-284 (KTAESADVRKSVDKIV) shows a compositional bias: basic and acidic residues. Positions 328–343 (SPSGKKSTKTTDQMTM) are enriched in polar residues. Low complexity predominate over residues 374-384 (GKASATSGKAS).

In terms of assembly, heterodimer of an alpha and a beta subunit.

The protein localises to the nucleus. It localises to the chromosome. It is found in the telomere. In terms of biological role, may function as protective capping of the single-stranded telomeric overhang. May also participate in telomere length regulation during DNA replication. This chain is Telomere-binding protein subunit beta (STY43), found in Stylonychia mytilus (Ciliate).